The primary structure comprises 361 residues: Peptide chain release factor 1 (361 aa).

Glutamine 237 carries the N5-methylglutamine modification. Over residues 286–296 (EKRRSAEESTR) the composition is skewed to basic and acidic residues. The tract at residues 286 to 305 (EKRRSAEESTRRNLVSSGDR) is disordered.

It belongs to the prokaryotic/mitochondrial release factor family. In terms of processing, methylated by PrmC. Methylation increases the termination efficiency of RF1.

It is found in the cytoplasm. Functionally, peptide chain release factor 1 directs the termination of translation in response to the peptide chain termination codons UAG and UAA. This is Peptide chain release factor 1 from Shewanella pealeana (strain ATCC 700345 / ANG-SQ1).